A 730-amino-acid polypeptide reads, in one-letter code: Denticleless protein homolog (730 aa).

M1 carries the post-translational modification N-acetylmethionine. WD repeat units follow at residues 47-89, 96-135, and 138-178; these read GVPV…FRKK, AHWN…LIGT, and GHQC…KDGF. The DDB1-binding motif motif lies at 168–171; the sequence is WDTR. Over residues 188–198 the composition is skewed to polar residues; the sequence is AHNTSDKQTPS. The disordered stretch occupies residues 188 to 210; sequence AHNTSDKQTPSKPKKKQNSKGLA. T196 is subject to Phosphothreonine. A Nuclear localization signal motif is present at residues 197 to 203; sequence PSKPKKK. WD repeat units follow at residues 214-253, 267-308, 313-354, and 358-398; these read DFQQ…TAYR, SSTR…TSPV, GHQN…QPPT, and GHSQ…EEKP. Positions 243-246 match the DDB1-binding motif motif; sequence WDLR. A disordered region spans residues 399-443; sequence GGDKLSTVGWASQKKKESRPGLVTVTSSQSTPAKAPRAKCNPSNS. 2 positions are modified to phosphoserine: S410 and S426. Residue T464 is modified to Phosphothreonine; by CDK1 and CDK2. Positions 465–498 are disordered; the sequence is PTFSIKTSPAKARSPINRRGSVSSVSPKPPSSFK. 4 positions are modified to phosphoserine: S485, S490, S495, and S512. Residue T516 is modified to Phosphothreonine. S557 is modified (phosphoserine). 2 disordered regions span residues 599 to 631 and 644 to 703; these read SKDS…YASE and GEGS…TITP. S676 and S679 each carry phosphoserine. The span at 679-689 shows a compositional bias: polar residues; sequence SPSSQTPNSRR. A phosphothreonine mark is found at T684 and T702. A Phosphoserine modification is found at S717.

Belongs to the WD repeat cdt2 family. In terms of assembly, component of the DCX(DTL) E3 ubiquitin ligase complex (also called CRL4(CDT2)), at least composed of CUL4 (CUL4A or CUL4B), DDB1, DTL/CDT2 and RBX1. Interacts with CDKN1A. Interacts with DDB1. Interacts with FBXO11; SCF(FBXWO11) controls DTL stability but DCX(DTL) does not control FBXO11 stability. Interacts with CRY1. Post-translationally, ubiquitinated by the anaphase promoting complex/cyclosome (APC/C). Autoubiquitinated through 'Lys-48'-polyubiquitin chains in a PCNA-independent reaction, allowing proteasomal turnover. Polyubiquitinated by SCF(FBXO11) when not phosphorylated, leading to its degradation. A tight regulation of the polyubiquitination by SCF(FBXO11) is involved in the control of different processes such as TGF-beta signaling, cell cycle progression and exit. In terms of processing, phosphorylated at Thr-464 by CDK1/Cyclin-B and CDK2/Cyclin-A but not by CDK2/Cyclin-E, MAPK1 or PLK1. Phosphorylation at Thr-464 inhibits the interaction with FBXO11 and decreases upon cell cycle exit induced by TGF-beta or serum starvation. In terms of tissue distribution, expressed in placenta and testis, very low expression seen in skeletal muscle. Detected in all hematopoietic tissues examined, with highest expression in thymus and bone marrow. A low level detected in the spleen and lymph node, and barely detectable level in the peripheral leukocytes. RA treatment down-regulated the expression in NT2 cell.

The protein resides in the nucleus. It is found in the nucleus membrane. Its subcellular location is the cytoplasm. The protein localises to the cytoskeleton. It localises to the microtubule organizing center. The protein resides in the centrosome. It is found in the chromosome. Its pathway is protein modification; protein ubiquitination. Its function is as follows. Substrate-specific adapter of a DCX (DDB1-CUL4-X-box) E3 ubiquitin-protein ligase complex required for cell cycle control, DNA damage response and translesion DNA synthesis. The DCX(DTL) complex, also named CRL4(CDT2) complex, mediates the polyubiquitination and subsequent degradation of CDT1, CDKN1A/p21(CIP1), FBH1, KMT5A and SDE2. CDT1 degradation in response to DNA damage is necessary to ensure proper cell cycle regulation of DNA replication. CDKN1A/p21(CIP1) degradation during S phase or following UV irradiation is essential to control replication licensing. KMT5A degradation is also important for a proper regulation of mechanisms such as TGF-beta signaling, cell cycle progression, DNA repair and cell migration. Most substrates require their interaction with PCNA for their polyubiquitination: substrates interact with PCNA via their PIP-box, and those containing the 'K+4' motif in the PIP box, recruit the DCX(DTL) complex, leading to their degradation. In undamaged proliferating cells, the DCX(DTL) complex also promotes the 'Lys-164' monoubiquitination of PCNA, thereby being involved in PCNA-dependent translesion DNA synthesis. The DDB1-CUL4A-DTL E3 ligase complex regulates the circadian clock function by mediating the ubiquitination and degradation of CRY1. The polypeptide is Denticleless protein homolog (DTL) (Homo sapiens (Human)).